The chain runs to 154 residues: Aspartate carbamoyltransferase regulatory chain (154 aa).

Residues Cys109, Cys114, Cys138, and Cys141 each contribute to the Zn(2+) site.

Belongs to the PyrI family. Contains catalytic and regulatory chains. Requires Zn(2+) as cofactor.

Its function is as follows. Involved in allosteric regulation of aspartate carbamoyltransferase. The sequence is that of Aspartate carbamoyltransferase regulatory chain from Serratia proteamaculans (strain 568).